The chain runs to 1522 residues: Histone-lysine N-methyltransferase EZH2 (1522 aa).

The disordered stretch occupies residues 1–196; the sequence is MSPARGDANA…PKTPTPKNTE (196 aa). Basic and acidic residues predominate over residues 39-61; it reads NRENLRDRDRADKLEKLEKDAHA. Low complexity-rich tracts occupy residues 64–76 and 103–130; these read QTQT…PVTV and RGST…SPSL. Polar residues predominate over residues 141–162; it reads ILASRTSRFSNRTGIRDSQSPS. Over residues 180–195 the composition is skewed to low complexity; the sequence is ATSNTPAPKTPTPKNT. An SBD domain region spans residues 190–220; sequence PTPKNTEWTVDKIASALSVLAEEVPQNHSRL. The segment at 221–250 is EBD domain; the sequence is VNFLLEETEKRAPQPRHLSKTDPFAHMKSK. The tract at residues 251 to 300 is BAM domain; that stretch reads AIDANRPRPEGVPTMDVKFKQHSGEYGKSRNSGRRFQYPVVCIKPDREPV. The tract at residues 301 to 320 is SAL domain; the sequence is PPYRFHHAEIRKNILALNSQ. The tract at residues 321–360 is SRM domain; sequence LNFVPHLRDVDPNSAEEQKYSAWLMDLENLDSKSGFKIQP. The SANT1L domain stretch occupies residues 361–480; it reads RSQKIAKRAQ…PIFDNKRAKD (120 aa). A disordered region spans residues 406-426; it reads PESDDSMTPQQKSNLLDTYSD. Polar residues predominate over residues 411–422; that stretch reads SMTPQQKSNLLD. The interval 481 to 560 is MCSS domain; the sequence is APGSQKPPDE…EQRQKTEGGS (80 aa). Residues Cys508, Cys511, Cys516, His518, Cys570, Cys574, Cys615, Cys625, Cys685, His687, Cys691, Cys697, Cys699, Cys709, Cys713, Cys715, Cys720, Cys727, Cys729, Cys736, Cys746, Cys748, Cys755, Cys760, Cys763, and Cys784 each contribute to the Zn(2+) site. Residues 561 to 650 are SANT2L domain; it reads ANAPPAHPPC…PVEPRTIPKQ (90 aa). The 123-residue stretch at 658 to 780 folds into the CXC domain; the sequence is RRKKQLMSDW…PENAYDEVLH (123 aa). The region spanning 795–919 is the SET domain; sequence KAVVLGKSQL…AGEELFFNYG (125 aa). The S-adenosyl-L-homocysteine site is built by Tyr809, Lys852, Ser854, and Tyr855. The S-adenosyl-L-methionine site is built by Tyr809, Lys852, Ser854, Tyr855, Asn880, His881, and Thr926. S-adenosyl-L-homocysteine is bound at residue His881. Lys927 lines the S-adenosyl-L-homocysteine pocket. Positions 933-1522 are disordered; the sequence is NEQSGAETTP…KPARYRDEGE (590 aa). Polar residues predominate over residues 935–946; the sequence is QSGAETTPQQPK. The span at 971–988 shows a compositional bias: acidic residues; sequence GFDDDDRDGNDSDPDDLW. Residues 992 to 1024 show a composition bias toward low complexity; it reads QQQQQQQQQQQQQQQQQQQQQQQQQQQQQQQQQ. Residues 1025–1038 are compositionally biased toward polar residues; it reads AQKPQPSTSHQPQS. Residues 1053–1066 are compositionally biased toward basic and acidic residues; sequence SPDKQLRRENHDAQ. The segment covering 1072–1091 has biased composition (low complexity); sequence QFQQQEQQQQQQQQQQQQQQ. Residues 1127 to 1136 show a composition bias toward polar residues; the sequence is DSSSGGSANE. A compositionally biased stretch (basic residues) spans 1142 to 1162; the sequence is KPSRRGGARPGAGRKPKHRPP. Composition is skewed to basic and acidic residues over residues 1207–1221 and 1228–1238; these read SDSK…TDKE and VNEKDREKGRD. A compositionally biased stretch (low complexity) spans 1255-1299; sequence KSAPSPAKKQASSPTKISDSNRTTSKNTSSNNNNNTNNNNNNNNN. The segment covering 1316–1330 has biased composition (polar residues); sequence HLTNSQPAALSPSAT. Low complexity-rich tracts occupy residues 1355-1385 and 1415-1428; these read STMT…SSSS and SSSL…SVFS. Over residues 1455 to 1464 the composition is skewed to polar residues; the sequence is SGLNSTSLSQ. Residues 1465-1494 show a composition bias toward basic and acidic residues; that stretch reads ERGEKHEKHEKEKPKEKKGEKERERERDRS.

It belongs to the class V-like SAM-binding methyltransferase superfamily. Histone-lysine methyltransferase family. EZ subfamily. In terms of assembly, component of the polycomb repressive complex 2 (PRC2) that consists of four core subunits icluding EZH2, EED, SUZ12, and RBBP4, among which EZH2 is the catalytic subunit and which minimally requires EED and SUZ12 for catalysis.

The protein localises to the nucleus. The enzyme catalyses L-lysyl(27)-[histone H3] + 3 S-adenosyl-L-methionine = N(6),N(6),N(6)-trimethyl-L-lysyl(27)-[histone H3] + 3 S-adenosyl-L-homocysteine + 3 H(+). Its activity is regulated as follows. The end product of PRC2 catalysis, H3K27me3, interacts with EED to stimulate the enzymatic activity of PRC2 allosterically. The enzymatic activity of PRC2 is regulated in a very complex manner and PCR2 can adopt different stages including the autoinhibited (A); SAM-bound autoinhibited (A'), basal (B), and H3K27me3-stimulated (S) stages. Actictivity is inhibited by pyridone inhibitors such as GSK126. Its function is as follows. Catalytic subunit of the of the Polycomb Repressive Complex 2 (PRC2), a histone H3 lysine methyltransferase responsible for generating mono-, di-, and tri-methylation on Lys27 (H3K27me1, H3K27me2 and H3K27me3). The tri-methylated form is known to be critical in gene repression, and its proper placement is essential in defining repression patterns during development. The PRC2 complex interacts with thousands of RNA species in vivo, but the physiological function of RNA binding has still to be determined. The polypeptide is Histone-lysine N-methyltransferase EZH2 (Chaetomium thermophilum (strain DSM 1495 / CBS 144.50 / IMI 039719) (Thermochaetoides thermophila)).